Consider the following 1272-residue polypeptide: AF4/FMR2 family member 2 (1272 aa).

Disordered stretches follow at residues 93 to 183 (IPKN…LTQD), 201 to 225 (QIGEAEESNPSAKEDSNPNSSGEDA), and 283 to 302 (AYVRPMDGQDQAPDISPTLK). The segment covering 97-107 (SVPQNPNNKNE) has biased composition (polar residues). Residues 151-160 (SKPEWSRDSH) show a composition bias toward basic and acidic residues. The segment covering 161–183 (NPSTVLASQASGQPNKMQTLTQD) has biased composition (polar residues). Ser391 bears the Phosphoserine mark. Disordered stretches follow at residues 418-491 (KAKP…KWQL), 535-687 (TNAS…DQEE), 779-829 (SLHA…PEKK), and 842-903 (PPCI…QDKN). Residues 426–438 (VNPPLATPQPPPA) are compositionally biased toward pro residues. A compositionally biased stretch (low complexity) spans 439-452 (VQASGGSGSSSESE). At Thr478 the chain carries Phosphothreonine. Residues 543 to 558 (EPKERPLLSLIREKAR) are compositionally biased toward basic and acidic residues. The span at 576–586 (STTSETVSQRT) shows a compositional bias: polar residues. Basic and acidic residues predominate over residues 616–629 (PKEKESVELHDPPR). Positions 630–640 (GRNKATAHKPA) are enriched in basic residues. Residues 818–829 (PTEVAEKIPEKK) are compositionally biased toward basic and acidic residues. Pro residues-rich tracts occupy residues 844 to 853 (CISPAPPHKP) and 874 to 883 (FPPPLSPLPE).

It belongs to the AF4 family.

The protein localises to the nucleus speckle. Functionally, RNA-binding protein. Might be involved in alternative splicing regulation through an interaction with G-quartet RNA structure. In Pan troglodytes (Chimpanzee), this protein is AF4/FMR2 family member 2 (AFF2).